The sequence spans 354 residues: UPF0283 membrane protein Meso_1416 (354 aa).

The segment at 1-28 is disordered; it reads MSEPRRPAAFRIEPAPSPSPEATREDVR. A run of 2 helical transmembrane segments spans residues 71-91 and 105-125; these read LGAV…GLWA and LGWL…AIVV.

Belongs to the UPF0283 family.

It is found in the cell inner membrane. The sequence is that of UPF0283 membrane protein Meso_1416 from Chelativorans sp. (strain BNC1).